Here is a 64-residue protein sequence, read N- to C-terminus: Conotoxin Cal6.26 (64 aa).

Residues 1–22 (MKLTCVMIVAVLVLTVCKVVTS) form the signal peptide. 3 disulfide bridges follow: C32-C50, C40-C54, and C49-C60.

As to expression, expressed by the venom duct.

The protein resides in the secreted. Probable neurotoxin. In Californiconus californicus (California cone), this protein is Conotoxin Cal6.26.